The primary structure comprises 275 residues: Dermonecrotic toxin LhSicTox-alphaVI1ii (275 aa).

The active site involves histidine 5. Mg(2+) contacts are provided by glutamate 25 and aspartate 27. Histidine 41 acts as the Nucleophile in catalysis. 2 disulfide bridges follow: cysteine 45–cysteine 51 and cysteine 47–cysteine 192. Aspartate 85 is a Mg(2+) binding site.

This sequence belongs to the arthropod phospholipase D family. Class II subfamily. Mg(2+) serves as cofactor. As to expression, expressed by the venom gland.

The protein localises to the secreted. The catalysed reaction is an N-(acyl)-sphingosylphosphocholine = an N-(acyl)-sphingosyl-1,3-cyclic phosphate + choline. The enzyme catalyses an N-(acyl)-sphingosylphosphoethanolamine = an N-(acyl)-sphingosyl-1,3-cyclic phosphate + ethanolamine. It carries out the reaction a 1-acyl-sn-glycero-3-phosphocholine = a 1-acyl-sn-glycero-2,3-cyclic phosphate + choline. It catalyses the reaction a 1-acyl-sn-glycero-3-phosphoethanolamine = a 1-acyl-sn-glycero-2,3-cyclic phosphate + ethanolamine. In terms of biological role, dermonecrotic toxins cleave the phosphodiester linkage between the phosphate and headgroup of certain phospholipids (sphingolipid and lysolipid substrates), forming an alcohol (often choline) and a cyclic phosphate. This toxin acts on sphingomyelin (SM). It may also act on ceramide phosphoethanolamine (CPE), lysophosphatidylcholine (LPC) and lysophosphatidylethanolamine (LPE), but not on lysophosphatidylserine (LPS), and lysophosphatidylglycerol (LPG). It acts by transphosphatidylation, releasing exclusively cyclic phosphate products as second products. Induces dermonecrosis, hemolysis, increased vascular permeability, edema, inflammatory response, and platelet aggregation. In Loxosceles hirsuta (Recluse spider), this protein is Dermonecrotic toxin LhSicTox-alphaVI1ii.